A 429-amino-acid polypeptide reads, in one-letter code: Nucleotide exchange factor Sil1 (429 aa).

An N-terminal signal peptide occupies residues 1-24; it reads MSGKQVVILLGSVLILGCLQVAAA. N-linked (GlcNAc...) asparagine glycosylation is present at asparagine 29. A disordered region spans residues 70-98; it reads DESERGTSLQSQPDDQNARESHDDNEPLA. Positions 75–84 are enriched in polar residues; that stretch reads GTSLQSQPDD. Residues 85–94 are compositionally biased toward basic and acidic residues; sequence QNARESHDDN. A coiled-coil region spans residues 104 to 135; it reads DIIEESIRRVKEQKKSYAELRKAYKEFQKNFR. 3 N-linked (GlcNAc...) asparagine glycosylation sites follow: asparagine 150, asparagine 199, and asparagine 400. The short motif at 426 to 429 is the Prevents secretion from ER element; the sequence is HTEL.

This sequence belongs to the SIL1 family.

It is found in the endoplasmic reticulum lumen. Functionally, required for protein translocation and folding in the endoplasmic reticulum (ER). Functions as a nucleotide exchange factor for an ER lumenal chaperone of HSP70 family. The protein is Nucleotide exchange factor Sil1 of Drosophila melanogaster (Fruit fly).